Consider the following 425-residue polypeptide: Neuromedin-U receptor 1 (425 aa).

Topologically, residues 1 to 59 (MTPPCLNCSFFPGQLSPNASTGLLSCNDSEFKEHFDLEDLNLTHEDLRLKYLGPQQVKQ) are extracellular. Asn-41 carries N-linked (GlcNAc...) asparagine glycosylation. The helical transmembrane segment at 60-80 (FLPICVTYLLIFVVGTLGNGL) threads the bilayer. At 81–96 (TCTVILRQKAMHTPTN) the chain is on the cytoplasmic side. A helical membrane pass occupies residues 97-117 (FYLFSLAVSDLLVLLVGLPLE). Over 118–137 (LYEMQHNYPFQLGAGGCYFR) the chain is Extracellular. A disulfide bond links Cys-134 and Cys-219. The chain crosses the membrane as a helical span at residues 138-158 (ILLLETVCLASVLNVTALSVE). Residues 159-181 (RYVAVVHPLQAKSVMTRTHVRRM) are Cytoplasmic-facing. The helical transmembrane segment at 182–202 (LGAIWVFAILFSLPNTSLHGL) threads the bilayer. The Extracellular segment spans residues 203 to 235 (SPLYVPCRGPVPDSVTCTLVRPQFFYKLVIQTT). The chain crosses the membrane as a helical span at residues 236–256 (ILLFFCLPMVTISVLYLLIGL). Residues 257-294 (RLRRERILLQEEVKGRISAAARQASHRSIQLRDRERRQ) lie on the Cytoplasmic side of the membrane. Residues 295–315 (VTKMLIALVIVFGTCWVPFHA) form a helical membrane-spanning segment. The Extracellular segment spans residues 316 to 331 (DRLMWSMVSHWTDGLR). A helical transmembrane segment spans residues 332–352 (LAFQSVHLASGVFLYLGSAAN). Residues 353 to 425 (PVLYNLMSTR…GCEQETDPPE (73 aa)) are Cytoplasmic-facing. The disordered stretch occupies residues 406–425 (DVPLAENRDPGCEQETDPPE).

This sequence belongs to the G-protein coupled receptor 1 family. In terms of tissue distribution, highly expressed in the small intestine and lung. Low expression in the central nervous system.

The protein localises to the cell membrane. Functionally, receptor for the neuromedin-U and neuromedin-S neuropeptides. The protein is Neuromedin-U receptor 1 (Nmur1) of Rattus norvegicus (Rat).